Here is a 150-residue protein sequence, read N- to C-terminus: FAD synthase (150 aa).

ATP-binding positions include 11–12 (TF), 16–19 (HPGH), Asp96, and Tyr124.

Belongs to the archaeal FAD synthase family. As to quaternary structure, homodimer. It depends on a divalent metal cation as a cofactor.

It carries out the reaction FMN + ATP + H(+) = FAD + diphosphate. The protein operates within cofactor biosynthesis; FAD biosynthesis; FAD from FMN: step 1/1. Its function is as follows. Catalyzes the transfer of the AMP portion of ATP to flavin mononucleotide (FMN) to produce flavin adenine dinucleotide (FAD) coenzyme. The protein is FAD synthase of Methanococcus maripaludis (strain C7 / ATCC BAA-1331).